A 278-amino-acid chain; its full sequence is Urease accessory protein UreD 1 (278 aa).

It belongs to the UreD family. UreD, UreF and UreG form a complex that acts as a GTP-hydrolysis-dependent molecular chaperone, activating the urease apoprotein by helping to assemble the nickel containing metallocenter of UreC. The UreE protein probably delivers the nickel.

Its subcellular location is the cytoplasm. Its function is as follows. Required for maturation of urease via the functional incorporation of the urease nickel metallocenter. This Bradyrhizobium sp. (strain ORS 278) protein is Urease accessory protein UreD 1.